The chain runs to 275 residues: Translation initiation factor 2 subunit alpha (275 aa).

The region spanning 12 to 83 (GEFVIATVKS…NKGHIDLSLK (72 aa)) is the S1 motif domain.

Belongs to the eIF-2-alpha family. In terms of assembly, heterotrimer composed of an alpha, a beta and a gamma chain.

EIF-2 functions in the early steps of protein synthesis by forming a ternary complex with GTP and initiator tRNA. This chain is Translation initiation factor 2 subunit alpha, found in Thermococcus onnurineus (strain NA1).